Here is a 323-residue protein sequence, read N- to C-terminus: MVSVNLSSLPIVLDMINRNDDLNIQVIKLENGATVLDCGVNVTGSFEAGKLFTKICLGGLAHVGISISGTLDNKMVLPCVKVKTSHPAVATLGAQKAGWSVSVGKYFAMGSGPARALAMMPKVTYEEIEYRDDADVAILCLEASKLPDEKVADYVAQKCGVDVSKVYLLVAPTASIVGAVQISGRVVENGTYKMLEALHFDVRKVKLAAGIAPIAPIIGDDLKMMGATNDMVLYGGRTFYYIKSDEGDDIEALCKSLPSCSAQTYGKPFLEVFKEANYDFYKIDKGMFAPAVVTINDLRTGKLVTHGNTNIDVLKKSLKYTEI.

This sequence belongs to the MCH family.

It localises to the cytoplasm. The enzyme catalyses 5,10-methenyl-5,6,7,8-tetrahydromethanopterin + H2O = N(5)-formyl-5,6,7,8-tetrahydromethanopterin + H(+). Its pathway is one-carbon metabolism; methanogenesis from CO(2); 5,10-methenyl-5,6,7,8-tetrahydromethanopterin from CO(2): step 3/3. In terms of biological role, catalyzes the reversible interconversion of 5-formyl-H(4)MPT to methenyl-H(4)MPT(+). The sequence is that of Methenyltetrahydromethanopterin cyclohydrolase from Methanococcus vannielii (strain ATCC 35089 / DSM 1224 / JCM 13029 / OCM 148 / SB).